The sequence spans 361 residues: Peptide chain release factor 1 (361 aa).

Q235 is modified (N5-methylglutamine).

The protein belongs to the prokaryotic/mitochondrial release factor family. Methylated by PrmC. Methylation increases the termination efficiency of RF1.

The protein resides in the cytoplasm. Functionally, peptide chain release factor 1 directs the termination of translation in response to the peptide chain termination codons UAG and UAA. The polypeptide is Peptide chain release factor 1 (Xanthomonas campestris pv. campestris (strain 8004)).